A 244-amino-acid chain; its full sequence is Aspartate/glutamate leucyltransferase (244 aa).

Belongs to the R-transferase family. Bpt subfamily.

It is found in the cytoplasm. It catalyses the reaction N-terminal L-glutamyl-[protein] + L-leucyl-tRNA(Leu) = N-terminal L-leucyl-L-glutamyl-[protein] + tRNA(Leu) + H(+). The enzyme catalyses N-terminal L-aspartyl-[protein] + L-leucyl-tRNA(Leu) = N-terminal L-leucyl-L-aspartyl-[protein] + tRNA(Leu) + H(+). Functions in the N-end rule pathway of protein degradation where it conjugates Leu from its aminoacyl-tRNA to the N-termini of proteins containing an N-terminal aspartate or glutamate. This Paramagnetospirillum magneticum (strain ATCC 700264 / AMB-1) (Magnetospirillum magneticum) protein is Aspartate/glutamate leucyltransferase.